We begin with the raw amino-acid sequence, 386 residues long: L-lactate dehydrogenase (386 aa).

An FMN hydroxy acid dehydrogenase domain is found at 1 to 380 (MIISAASDYR…SGDALSRVTR (380 aa)). Y24 provides a ligand contact to substrate. The FMN site is built by S106 and Q127. A substrate-binding site is contributed by Y129. Position 155 (T155) interacts with FMN. Position 164 (R164) interacts with substrate. K251 provides a ligand contact to FMN. Residue H275 is the Proton acceptor of the active site. Substrate is bound at residue R278. 306–330 (DSGIRSGLDVVRMLALGADAVLLGR) lines the FMN pocket.

Belongs to the FMN-dependent alpha-hydroxy acid dehydrogenase family. FMN is required as a cofactor.

It is found in the cell inner membrane. It catalyses the reaction (S)-lactate + A = pyruvate + AH2. In terms of biological role, catalyzes the conversion of L-lactate to pyruvate. Is coupled to the respiratory chain. The chain is L-lactate dehydrogenase from Xanthomonas campestris pv. campestris (strain B100).